The chain runs to 2625 residues: Highly reducing polyketide synthase frbB (2625 aa).

Over residues 1 to 10 the composition is skewed to basic and acidic residues; the sequence is MRNIDEHMSE. Residues 1–25 are disordered; that stretch reads MRNIDEHMSERATLQSSGGYGERDS. One can recognise a Ketosynthase family 3 (KS3) domain in the interval 27–449; that stretch reads VEPIAIIGMS…GTNAHVILDR (423 aa). Catalysis depends on for beta-ketoacyl synthase activity residues Cys200, His334, and His375. A malonyl-CoA:ACP transacylase (MAT) domain region spans residues 563 to 883; that stretch reads YVFSGQGAQY…DAASTLLTTI (321 aa). The segment at 942 to 1080 is N-terminal hotdog fold; sequence HELLGNMSTD…GRIRAVLDDS (139 aa). Residues 942-1252 are dehydratase (DH) domain; sequence HELLGNMSTD…GMILAKLPGG (311 aa). Residues 942-1255 form the PKS/mFAS DH domain; it reads HELLGNMSTD…LAKLPGGTSR (314 aa). The active-site Proton acceptor; for dehydratase activity is His974. The segment at 1102–1255 is C-terminal hotdog fold; the sequence is VRFVSPSAFY…LAKLPGGTSR (154 aa). The active-site Proton donor; for dehydratase activity is Asp1167. The methyltransferase (CMet) domain stretch occupies residues 1490–1673; sequence YHQIKAYIAE…GFVDTEPVFR (184 aa). Residues 1907 to 2220 form an enoyl reductase (ER) domain region; the sequence is GLLETFHWKP…SGKHIGKVIL (314 aa). Positions 2261-2439 are ketoreductase (KR) domain; that stretch reads AVYIVVGGLG…GYSINIGPVS (179 aa). Residues 2542 to 2619 form the Carrier domain; the sequence is GAEAAVLTAI…HLARLAAEES (78 aa). Ser2579 carries the post-translational modification O-(pantetheine 4'-phosphoryl)serine.

The protein operates within antifungal biosynthesis. Functionally, highly reducing polyketide synthase; part of the gene cluster that mediates the biosynthesis of the antifungal antibiotic FR901469, an inhibitor of beta-1,3-glucansynthase, exerting antifungal activity against the pathogenes Candida albicans and Aspergillus fumigatus. FR901469 is a cyclic depsipeptide containing 12 amino acid residues and a fatty acid chain. The NRPS frbI contains 12 modules responsible for the formation of the depsipeptide backbone which is denoted as Acyl-Thr-Ala-Tyr-Val-4OHPro-Thr-Thr-3OHPro-threo3OHGln-Gly-Thr-Orn-OH (C71H116N14O23). The PKS frbB is probably involved in the production of the hydrocarbon chain, and the acyl-CoA ligase frbC might be involved in the transport of the chain to the peptide ptoduct of frbI. Because FR901469 contains 3 hydroxylated amino acid residues, the 3 oxygenases frbA, frbH, and frbJ might be participating in amino acid hydroxylation. As no thioesterase domains were detected in frbI or frbB, the thioesterases frbD and frbE may instead release and cyclize the products of the NRPS and PKS, respectively. The chain is Highly reducing polyketide synthase frbB from Dothideomycetidae sp. (strain 11243) (Fungal sp. (strain No.11243)).